We begin with the raw amino-acid sequence, 262 residues long: MTTTTATATADPAEQAHQFPLPKILEYPASTPPILITQGAEGRLYKTTYLLPDIPCALKYRPPKPWRHPILDQRLTKHRILSEARILAKCRRDGVRVPAVYAVDESAGWLMLEWVSGGPVRKSINERLGNRTEGIENDAELKDLMRRIGTAIGNMHKVGIVHGDLTTSNMMLEPLANPQDDNPLHGELVIIDLGLSSGSISDEDRAVDLYVLERAFGSTHPRAECVFSEVLDAYGQTFKQAKVVLKKLEDVRMRGRKRSMLG.

In terms of domain architecture, Protein kinase spans 30 to 262; it reads STPPILITQG…MRGRKRSMLG (233 aa). Residues 36–44 and Lys59 contribute to the ATP site; that span reads ITQGAEGRL. Asp164 serves as the catalytic Proton acceptor.

This sequence belongs to the protein kinase superfamily. BUD32 family. Component of the EKC/KEOPS complex composed of at least BUD32, CGI121, GON7, KAE1 and PCC1; the whole complex dimerizes.

It localises to the cytoplasm. Its subcellular location is the nucleus. The protein localises to the chromosome. It is found in the telomere. The catalysed reaction is L-seryl-[protein] + ATP = O-phospho-L-seryl-[protein] + ADP + H(+). It carries out the reaction L-threonyl-[protein] + ATP = O-phospho-L-threonyl-[protein] + ADP + H(+). Component of the EKC/KEOPS complex that is required for the formation of a threonylcarbamoyl group on adenosine at position 37 (t(6)A37) in tRNAs that read codons beginning with adenine. The complex is probably involved in the transfer of the threonylcarbamoyl moiety of threonylcarbamoyl-AMP (TC-AMP) to the N6 group of A37. BUD32 has ATPase activity in the context of the EKC/KEOPS complex and likely plays a supporting role to the catalytic subunit KAE1. The EKC/KEOPS complex also promotes both telomere uncapping and telomere elongation. The complex is required for efficient recruitment of transcriptional coactivators. The protein is EKC/KEOPS complex subunit BUD32 (BUD32) of Gibberella zeae (strain ATCC MYA-4620 / CBS 123657 / FGSC 9075 / NRRL 31084 / PH-1) (Wheat head blight fungus).